A 784-amino-acid chain; its full sequence is MKGAGGPDGAPKALLARALYDNHPDCSDELAFCRGDILTILEQDVPESEGWWTCLLHGRQGLAPANRLQILEEAPADGPCPPFFGGLEEAPGRSQENYEVPSPPTPGPVYEQMKSWVEGPPPPTVQIYEFPDPPTCARIVCEKTLSFPKQAIFTIPRAARTSLPALPCQVYDVPAQSRCPPASKEPGKQQLYDIPPSRQKATLGPLSSQANGQNVPLTSATALRRGGCNTLPNPQKSEWIYDTPVSLEKAGVQKASLANSGEELGHRGLPRYMSSFHSPPNSIARSHPPHPQKNGPMQKKLSLPEIPCYSFPPPKCMFPLDESVSYKVPSSFLIPRVEQQNTTPNIYDVPRAMPDVPQAGKELGKAGGPSENSVDHSSSWFCSRAASLSPEPDSISVSSSDSRASVLSSCSSTSTDSSSSSFSEEAAKELPLDLDSAKETVTALQHKVASSVSSLMHFVSRKWRFRDSLEANIDAIRRATDRIEESLREFLDFAHGVRGTAGNLTDSNLQTKIRDQLQTIANAYQILLETKERLESCGWSLEVLATDKVQNSPDDLERFVLVARTVPEDIKRFASIVIANGRLLFKSNCEKEEPVQWTPNAEFKLARRIQLPQKEGESYQRKAPFQKQRASEQPPELIEKNKTNACGQNPGSLIPRPLSQQNPEKRIHLSEHCRLYFGALLKAIGVLNGSLSNRQPPETFITQSKLIIMVGQKLVDTLCKETQERDFRNEILCGSSHLCSLLRNLALATKHAVLEYPSPAALGHLQAEARKLEQHTQQFRGTLE.

Residues 11-73 (PKALLARALY…PANRLQILEE (63 aa)) form the SH3 domain. Residues S197, S246, S302, S373, and S387 each carry the phosphoserine modification. The tract at residues 343–376 (TPNIYDVPRAMPDVPQAGKELGKAGGPSENSVDH) is disordered. A coiled-coil region spans residues 466 to 536 (RDSLEANIDA…LLETKERLES (71 aa)). A disordered region spans residues 614-635 (KEGESYQRKAPFQKQRASEQPP).

This sequence belongs to the CAS family. In terms of assembly, interacts (via SH3 domain) with PTK2/FAK1 (via C-terminus). Phosphorylated on tyrosines by SRC.

The protein localises to the cytoplasm. It is found in the cytoskeleton. The protein resides in the cell junction. Its subcellular location is the focal adhesion. Functionally, docking protein that plays a role in tyrosine kinase-based signaling related to cell adhesion and cell spreading. Regulates PTK2/FAK1 activity, focal adhesion integrity, and cell spreading. The sequence is that of Cas scaffolding protein family member 4 from Sus scrofa (Pig).